A 402-amino-acid polypeptide reads, in one-letter code: Tol-Pal system protein TolB (402 aa).

An N-terminal signal peptide occupies residues 1 to 17 (MKKIVAIFLVFLGSLWA).

This sequence belongs to the TolB family. In terms of assembly, the Tol-Pal system is composed of five core proteins: the inner membrane proteins TolA, TolQ and TolR, the periplasmic protein TolB and the outer membrane protein Pal. They form a network linking the inner and outer membranes and the peptidoglycan layer.

The protein localises to the periplasm. In terms of biological role, part of the Tol-Pal system, which plays a role in outer membrane invagination during cell division and is important for maintaining outer membrane integrity. The polypeptide is Tol-Pal system protein TolB (Campylobacter jejuni (strain RM1221)).